A 239-amino-acid chain; its full sequence is Probable transcriptional regulatory protein RBAM_007230 (239 aa).

The protein belongs to the TACO1 family. YeeN subfamily.

It is found in the cytoplasm. In Bacillus velezensis (strain DSM 23117 / BGSC 10A6 / LMG 26770 / FZB42) (Bacillus amyloliquefaciens subsp. plantarum), this protein is Probable transcriptional regulatory protein RBAM_007230.